Here is a 941-residue protein sequence, read N- to C-terminus: Probable respiratory burst oxidase homolog protein I (941 aa).

Over 1–374 (MSMSFSGGTH…LYSLQDNWKR (374 aa)) the chain is Cytoplasmic. 2 disordered regions span residues 29-48 (PSLPATYSPSPSSSSSSGEE) and 103-166 (ERLT…SGTE). Positions 36–45 (SPSPSSSSSS) are enriched in low complexity. Residues 103–117 (ERLTAGTNSKQQIQK) show a composition bias toward polar residues. 2 EF-hand-like regions span residues 196–204 (SKDGYLFKS) and 232–243 (RRIMVDKINLQE). One can recognise an EF-hand domain in the interval 254–289 (ESFDSRLQIFFNMVKNGDGRITENEVKEIIILSASA). Residues N269, D271, R273, and E278 each contribute to the Ca(2+) site. 2 positions are modified to phosphoserine: S346 and S350. Residues 375 to 395 (IWVLTLWFVIMAWLFMWKCYQ) form a helical membrane-spanning segment. The Extracellular portion of the chain corresponds to 396–407 (YKHKDAFHVMGY). A helical transmembrane segment spans residues 408–428 (CLVMAKGAAETLKFNMALILL). One can recognise a Ferric oxidoreductase domain in the interval 413 to 570 (KGAAETLKFN…LLLTVYVLLV (158 aa)). The Cytoplasmic segment spans residues 429-514 (PVCRNTITYL…YFGLVNTPVG (86 aa)). Residues 515–535 (ITGIIMVAFMLIAFTLASRRC) traverse the membrane as a helical segment. The Extracellular segment spans residues 536–557 (RRNLTKLPKPFDKLTGYNAFWY). Residues 558 to 578 (SHHLLLTVYVLLVIHGVSLYL) form a helical membrane-spanning segment. Over 579-586 (EHKWYRKT) the chain is Cytoplasmic. Residues 587-604 (VWMYLAVPVLLYVGERIF) traverse the membrane as a helical segment. The Extracellular segment spans residues 605-731 (RFFRSRLYTV…PYGAPAQDHW (127 aa)). The FAD-binding FR-type domain occupies 609–729 (SRLYTVEICK…DGPYGAPAQD (121 aa)). A helical membrane pass occupies residues 732 to 752 (KYDVVLLVGLGIGATPFVSIL). Residues 753–941 (RDLLNNIIKQ…TRFDFHKEQF (189 aa)) lie on the Cytoplasmic side of the membrane.

It belongs to the RBOH (TC 5.B.1.3) family. As to quaternary structure, monomer and homodimer.

Its subcellular location is the membrane. In terms of biological role, calcium-dependent NADPH oxidase that generates superoxide. The polypeptide is Probable respiratory burst oxidase homolog protein I (RBOHI) (Arabidopsis thaliana (Mouse-ear cress)).